A 410-amino-acid polypeptide reads, in one-letter code: G-protein coupled receptor family C group 5 member B (410 aa).

The first 28 residues, 1 to 28, serve as a signal peptide directing secretion; it reads MFLVLERKMRTHQVFPLPLLLVIASVAS. Topologically, residues 29-56 are extracellular; it reads ENASTSRGCGLDLLPQYVSLCDLDAIWG. An N-linked (GlcNAc...) asparagine glycan is attached at Asn30. The helical transmembrane segment at 57–77 threads the bilayer; that stretch reads IVVEAVAGAGALITLLLMLIL. At 78–94 the chain is on the cytoplasmic side; that stretch reads LVRLPFIKDKERKRPVC. The chain crosses the membrane as a helical span at residues 95-115; sequence LHFLFLLGTLGLFGLTFAFII. Residues 116–126 lie on the Extracellular side of the membrane; sequence QMDETICSIRR. A helical transmembrane segment spans residues 127–147; that stretch reads FLWGVLFALCFSCLLSQAWRV. Topologically, residues 148–164 are cytoplasmic; the sequence is RRLVRQGTSPASWQLVS. Residues 165–185 form a helical membrane-spanning segment; that stretch reads LALCLMLVQVIIATEWLVLTV. At 186 to 199 the chain is on the extracellular side; that stretch reads LRDTKPACAYEPMD. The chain crosses the membrane as a helical span at residues 200–220; it reads FVMALIYDMVLLAITLAQSLF. Topologically, residues 221-234 are cytoplasmic; the sequence is TLCGKFKRWKVNGA. A helical transmembrane segment spans residues 235 to 255; sequence FILVTTFLSALIWVVWMTMYL. Residues 256–271 lie on the Extracellular side of the membrane; it reads FGNSLIKQGDAWSDPT. Residues 272 to 292 form a helical membrane-spanning segment; it reads LAITLAASGWVFVIFHAIPEI. The Cytoplasmic segment spans residues 293–410; the sequence is HYTLLPPLQE…PPSHTGRHHW (118 aa). Ser355 bears the Phosphoserine mark. Residues 356 to 381 are disordered; sequence LEQRSSSLGKKPSSLGNRPSAPFRSN. A compositionally biased stretch (low complexity) spans 360 to 371; that stretch reads SSSLGKKPSSLG.

Belongs to the G-protein coupled receptor 3 family.

It is found in the cell membrane. The protein localises to the cytoplasmic vesicle membrane. In terms of biological role, G-protein coupled receptor involved in the regulation of cell volume. This Mus musculus (Mouse) protein is G-protein coupled receptor family C group 5 member B (Gprc5b).